The sequence spans 291 residues: tRNA-cytidine(32) 2-sulfurtransferase (291 aa).

Positions 36-41 (SGGKDS) match the PP-loop motif motif. [4Fe-4S] cluster-binding residues include Cys111, Cys114, and Cys202. Residues 258-291 (RDPWLDAEDEEAEDCGEPPAGDGVVSLGGARGGR) are disordered. The segment covering 262 to 273 (LDAEDEEAEDCG) has biased composition (acidic residues).

Belongs to the TtcA family. In terms of assembly, homodimer. The cofactor is Mg(2+). It depends on [4Fe-4S] cluster as a cofactor.

It localises to the cytoplasm. It carries out the reaction cytidine(32) in tRNA + S-sulfanyl-L-cysteinyl-[cysteine desulfurase] + AH2 + ATP = 2-thiocytidine(32) in tRNA + L-cysteinyl-[cysteine desulfurase] + A + AMP + diphosphate + H(+). Its pathway is tRNA modification. Catalyzes the ATP-dependent 2-thiolation of cytidine in position 32 of tRNA, to form 2-thiocytidine (s(2)C32). The sulfur atoms are provided by the cysteine/cysteine desulfurase (IscS) system. The sequence is that of tRNA-cytidine(32) 2-sulfurtransferase from Anaeromyxobacter dehalogenans (strain 2CP-1 / ATCC BAA-258).